A 144-amino-acid chain; its full sequence is Deoxyuridine 5'-triphosphate nucleotidohydrolase (144 aa).

Substrate-binding positions include arginine 63–glycine 65, asparagine 76, and threonine 80–aspartate 82.

It belongs to the dUTPase family. Mg(2+) is required as a cofactor.

It catalyses the reaction dUTP + H2O = dUMP + diphosphate + H(+). It participates in pyrimidine metabolism; dUMP biosynthesis; dUMP from dCTP (dUTP route): step 2/2. Its function is as follows. This enzyme is involved in nucleotide metabolism: it produces dUMP, the immediate precursor of thymidine nucleotides and it decreases the intracellular concentration of dUTP so that uracil cannot be incorporated into DNA. In Bacteroides thetaiotaomicron (strain ATCC 29148 / DSM 2079 / JCM 5827 / CCUG 10774 / NCTC 10582 / VPI-5482 / E50), this protein is Deoxyuridine 5'-triphosphate nucleotidohydrolase.